The chain runs to 375 residues: MPHKVFISRLKLTDFRNYAAAALTLDERHVVLTGDNGAGKTNLMEAVSLLSPGRGLRRAAYADVVRVAAPNGFSIFAELEGMEDTVEIGTGVDTSDETTARKLRINGTPAKTVDELTDHLRVLWLTPAMDGLFTGGSSERRRFLDRLVLSLDPAHGRRASDFERAMRSRNRLLSESRFDPSWLAGIEEQMASLGIAMALARQEMLGLLTRLIAETREATPFPSAALELSGFLDGQFDRPALDLEDAYAGMLREGRYRDAAAGRTLDGPHRTDLLVRHREKDMEAERCSTGEQKALLVGLILAHARLVGNLTGHAPVLLLDEIAAHLDEGRRAALFDLIDRLGGQAFMTGTDRAMFSALGERAQFFTVAHGGITKS.

ATP is bound at residue 34 to 41 (GDNGAGKT).

The protein belongs to the RecF family.

It localises to the cytoplasm. Its function is as follows. The RecF protein is involved in DNA metabolism; it is required for DNA replication and normal SOS inducibility. RecF binds preferentially to single-stranded, linear DNA. It also seems to bind ATP. The protein is DNA replication and repair protein RecF of Rhizobium rhizogenes (strain K84 / ATCC BAA-868) (Agrobacterium radiobacter).